Reading from the N-terminus, the 614-residue chain is Probable indole-3-acetic acid-amido synthetase GH3.2 (614 aa).

Belongs to the IAA-amido conjugating enzyme family. Expressed in roots, flowers and callus.

May catalyze the synthesis of indole-3-acetic acid (IAA)-amino acid conjugates, providing a mechanism for the plant to cope with the presence of excess auxin. The polypeptide is Probable indole-3-acetic acid-amido synthetase GH3.2 (GH3.2) (Oryza sativa subsp. japonica (Rice)).